Consider the following 638-residue polypeptide: 1-deoxy-D-xylulose-5-phosphate synthase (638 aa).

Thiamine diphosphate-binding positions include H81 and 122–124 (GHS). D153 serves as a coordination point for Mg(2+). Residues 154–155 (GS), N182, Y293, and E377 each bind thiamine diphosphate. N182 lines the Mg(2+) pocket.

It belongs to the transketolase family. DXPS subfamily. As to quaternary structure, homodimer. Mg(2+) serves as cofactor. The cofactor is thiamine diphosphate.

It carries out the reaction D-glyceraldehyde 3-phosphate + pyruvate + H(+) = 1-deoxy-D-xylulose 5-phosphate + CO2. The protein operates within metabolic intermediate biosynthesis; 1-deoxy-D-xylulose 5-phosphate biosynthesis; 1-deoxy-D-xylulose 5-phosphate from D-glyceraldehyde 3-phosphate and pyruvate: step 1/1. Catalyzes the acyloin condensation reaction between C atoms 2 and 3 of pyruvate and glyceraldehyde 3-phosphate to yield 1-deoxy-D-xylulose-5-phosphate (DXP). This Oleidesulfovibrio alaskensis (strain ATCC BAA-1058 / DSM 17464 / G20) (Desulfovibrio alaskensis) protein is 1-deoxy-D-xylulose-5-phosphate synthase.